A 425-amino-acid chain; its full sequence is E3 ubiquitin-protein ligase CBLL2 (425 aa).

The segment at 57 to 97 adopts an RING-type zinc-finger fold; the sequence is CDKCDLPIKIYGRIIPCKHAFCYHCANLYDKVGYKVCPRCR. Residues 96–154 form an HYB domain region; the sequence is CRYPVLRIEAHKRGSVFMCSIVQQCKRTYLSQKSLQAHIKRRHKRARKQVTSASLEKVR. A C2H2-type zinc finger spans residues 112 to 138; the sequence is FMCSIVQQCKRTYLSQKSLQAHIKRRH. Disordered stretches follow at residues 241–297 and 382–425; these read DHIQ…HQMP and TDAM…HRRY. Over residues 398 to 408 the composition is skewed to pro residues; the sequence is PCPPTRSPPPS. A compositionally biased stretch (basic residues) spans 412-425; sequence GRSHHSHQRRHRRY.

In terms of assembly, homodimer. Exclusively expressed in testis and sperm, including spermatocytes, round and elongated spermatids, and Leydig cells.

It localises to the cytoplasm. It catalyses the reaction S-ubiquitinyl-[E2 ubiquitin-conjugating enzyme]-L-cysteine + [acceptor protein]-L-lysine = [E2 ubiquitin-conjugating enzyme]-L-cysteine + N(6)-ubiquitinyl-[acceptor protein]-L-lysine.. It functions in the pathway protein modification; protein ubiquitination. Functionally, E3 ubiquitin ligase catalyzing the covalent attachment of ubiquitin moieties onto substrate proteins. May operate on tyrosine-phosphorylated SRC substrates. In Homo sapiens (Human), this protein is E3 ubiquitin-protein ligase CBLL2.